A 344-amino-acid polypeptide reads, in one-letter code: N-acetyl-gamma-glutamyl-phosphate reductase (344 aa).

Residue Cys-150 is part of the active site.

This sequence belongs to the NAGSA dehydrogenase family. Type 1 subfamily.

Its subcellular location is the cytoplasm. It carries out the reaction N-acetyl-L-glutamate 5-semialdehyde + phosphate + NADP(+) = N-acetyl-L-glutamyl 5-phosphate + NADPH + H(+). The protein operates within amino-acid biosynthesis; L-arginine biosynthesis; N(2)-acetyl-L-ornithine from L-glutamate: step 3/4. Functionally, catalyzes the NADPH-dependent reduction of N-acetyl-5-glutamyl phosphate to yield N-acetyl-L-glutamate 5-semialdehyde. The protein is N-acetyl-gamma-glutamyl-phosphate reductase of Azotobacter vinelandii (strain DJ / ATCC BAA-1303).